The following is a 269-amino-acid chain: Replication protein A 32 kDa subunit (269 aa).

A compositionally biased stretch (polar residues) spans 1–22 (MSNRVQGGFDNNSGNNQSAQKQ). A disordered region spans residues 1–25 (MSNRVQGGFDNNSGNNQSAQKQQAE). The segment at residues 69 to 149 (ITAKFEFLQS…AQIQLLYFSI (81 aa)) is a DNA-binding region (OB).

The protein belongs to the replication factor A protein 2 family. In terms of assembly, component of the replication protein A complex (RPA), a heterotrimeric complex composed of RPA1, RPA2/TEB2 and RPA3/TEB3. Component of the telomerase holoenzyme complex, composed of the catalytic core (the catalytic subunit TERT, the telomerase RNA template component TER and TAP65/p65), which is associated with two heterotrimeric subcomplexes: (i) the replication protein A (RPA)-related subcomplex, composed of TEB1, RPA2/TEB2 and RPA3/TEB3 and (ii) the CST-like subcomplex, composed of TAP75/p75, TAP45/p45 and TAP19/p19. TEB1 and the CST-like subcomplex are tethered to the catalytic core by TAP50/p50.

It localises to the nucleus. The protein resides in the chromosome. It is found in the telomere. Component of the heterotrimeric replication protein A (RPA) and holoenzyme telomerase ribonucleoprotein complexes. As part of the RPA complex, binds and stabilizes single-stranded DNA (ssDNA) intermediates, that form during DNA replication or upon DNA stress. It prevents their reannealing and in parallel, recruits and activates different proteins and complexes involved in DNA metabolism. Thereby, it plays an essential role both in DNA replication and the cellular response to DNA damage. In the cellular response to DNA damage, the RPA complex controls DNA repair and DNA damage checkpoint activation. Also part of a subcomplex of the holoenzyme telomerase ribonucleoprotein complex: this subcomplex that contains TEB1, RPA2/TEB2, RPA3/TEB3, but not RPA1, mediates the recruitment of telomerase to telomeric DNA via specific interaction between TEB1 and telomeric ssDNA. In the holoenzyme telomerase ribonucleoprotein complex, RPA2/TEB2 and RPA3/TEB3 act as assembly factors for TEB1 incorporation into telomerase holoenzyme. In the holoenzyme telomerase ribonucleoprotein complex, RPA2/TEB2 does not contribute to ssDNA affinity, while it contributes to ssDNA affinity in the RPA complex. The polypeptide is Replication protein A 32 kDa subunit (RPA2) (Tetrahymena thermophila (strain SB210)).